Reading from the N-terminus, the 176-residue chain is tRNA (cytidine(56)-2'-O)-methyltransferase (176 aa).

Residues leucine 86 and 111 to 115 each bind S-adenosyl-L-methionine; that span reads GAEKV.

It belongs to the aTrm56 family. As to quaternary structure, homodimer.

The protein resides in the cytoplasm. It carries out the reaction cytidine(56) in tRNA + S-adenosyl-L-methionine = 2'-O-methylcytidine(56) in tRNA + S-adenosyl-L-homocysteine + H(+). Its function is as follows. Specifically catalyzes the AdoMet-dependent 2'-O-ribose methylation of cytidine at position 56 in tRNAs. This chain is tRNA (cytidine(56)-2'-O)-methyltransferase, found in Methanoregula boonei (strain DSM 21154 / JCM 14090 / 6A8).